A 196-amino-acid polypeptide reads, in one-letter code: Prefoldin subunit 3 (196 aa).

Position 2 is an N-acetylalanine (Ala-2). Lys-58 carries the post-translational modification N6-acetyllysine.

Belongs to the prefoldin subunit alpha family. In terms of assembly, heterohexamer of two PFD-alpha type and four PFD-beta type subunits. Binds to the C-terminal part of VHL.

It is found in the cytoplasm. It localises to the nucleus. Binds specifically to cytosolic chaperonin (c-CPN) and transfers target proteins to it. Binds to nascent polypeptide chain and promotes folding in an environment in which there are many competing pathways for nonnative proteins. In Mus musculus (Mouse), this protein is Prefoldin subunit 3 (Vbp1).